A 416-amino-acid chain; its full sequence is Serine hydroxymethyltransferase (416 aa).

Residues leucine 117 and 121–123 (GHL) each bind (6S)-5,6,7,8-tetrahydrofolate. Position 225 is an N6-(pyridoxal phosphate)lysine (lysine 225). (6S)-5,6,7,8-tetrahydrofolate is bound at residue 351 to 353 (SPF).

The protein belongs to the SHMT family. As to quaternary structure, homodimer. The cofactor is pyridoxal 5'-phosphate.

Its subcellular location is the cytoplasm. It carries out the reaction (6R)-5,10-methylene-5,6,7,8-tetrahydrofolate + glycine + H2O = (6S)-5,6,7,8-tetrahydrofolate + L-serine. Its pathway is one-carbon metabolism; tetrahydrofolate interconversion. The protein operates within amino-acid biosynthesis; glycine biosynthesis; glycine from L-serine: step 1/1. Catalyzes the reversible interconversion of serine and glycine with tetrahydrofolate (THF) serving as the one-carbon carrier. This reaction serves as the major source of one-carbon groups required for the biosynthesis of purines, thymidylate, methionine, and other important biomolecules. Also exhibits THF-independent aldolase activity toward beta-hydroxyamino acids, producing glycine and aldehydes, via a retro-aldol mechanism. This is Serine hydroxymethyltransferase from Blochmanniella pennsylvanica (strain BPEN).